Consider the following 170-residue polypeptide: 3-isopropylmalate dehydratase small subunit 1 (170 aa).

It belongs to the LeuD family. LeuD type 2 subfamily. In terms of assembly, heterodimer of LeuC and LeuD.

The catalysed reaction is (2R,3S)-3-isopropylmalate = (2S)-2-isopropylmalate. It participates in amino-acid biosynthesis; L-leucine biosynthesis; L-leucine from 3-methyl-2-oxobutanoate: step 2/4. Its function is as follows. Catalyzes the isomerization between 2-isopropylmalate and 3-isopropylmalate, via the formation of 2-isopropylmaleate. This is 3-isopropylmalate dehydratase small subunit 1 (leuD1) from Methanopyrus kandleri (strain AV19 / DSM 6324 / JCM 9639 / NBRC 100938).